The primary structure comprises 300 residues: Acetylglutamate kinase (300 aa).

Residues 67 to 68 (GG), Arg89, and Asn194 each bind substrate.

The protein belongs to the acetylglutamate kinase family. ArgB subfamily.

The protein localises to the cytoplasm. It catalyses the reaction N-acetyl-L-glutamate + ATP = N-acetyl-L-glutamyl 5-phosphate + ADP. It participates in amino-acid biosynthesis; L-arginine biosynthesis; N(2)-acetyl-L-ornithine from L-glutamate: step 2/4. Its function is as follows. Catalyzes the ATP-dependent phosphorylation of N-acetyl-L-glutamate. The polypeptide is Acetylglutamate kinase (Saccharophagus degradans (strain 2-40 / ATCC 43961 / DSM 17024)).